The following is a 639-amino-acid chain: MSKVIGIDLGTTNSCVAVMDGKDVRVIENAEGARTTPSQVAFTESGERLVGQPAKRQAVTNPENTLFAIKRLIGRRYSDPTVEKDKGLVPYRIVKGDNGDAWVQTRDEKYAPSQLSAFILQKMKETAEAHLGEPVTQAVITVPAYFNDSQRQATKDAGKIAGLEVLRIINEPTAAALAYGMDKKNTGTIAVFDLGGGTFDVSVLEIGDGVFEVKSTNGDTFLGGEDFDARIIDYLASEFKKEQGIDLRTDRLALQRLKEAAEKAKIELSSSMQTEVNLPFITADQAGPKHLNIKLTRAKLEALVDDLVQRTVEPCRKALADAGIKASEIDEVILVGGMTRMPKVQQVVKDFFGREPHKGVNPDEVVAMGAAIQGGVLKGDVKDVLLLDVTPLSLGIETLGGVFTRLIDRNTTIPTRKSQTFSTAEDSQTAVTIRVFQGEREMAADNKMLGQFDLVGLPSAPRGVPQIEVTFDIDANGIVNVSAKDKATGKEQAIRIQASGGLSDNDIERMVKEAELNAEADRKRKEAVEARNHADGLIHATEKNLKEYGDKIPAEDKAKVEGDLTALKAVLDSEDAESIKAKTDALMQSAMKLGEAAYSAGQSAEGAPHAAGAEASAQSRTDDGVVDADFEEVDEKKGH.

Threonine 198 bears the Phosphothreonine; by autocatalysis mark. The disordered stretch occupies residues 597–639 (AYSAGQSAEGAPHAAGAEASAQSRTDDGVVDADFEEVDEKKGH). A compositionally biased stretch (low complexity) spans 603–617 (SAEGAPHAAGAEASA). A compositionally biased stretch (acidic residues) spans 624-633 (GVVDADFEEV).

Belongs to the heat shock protein 70 family.

In terms of biological role, acts as a chaperone. The chain is Chaperone protein DnaK from Rhodospirillum rubrum (strain ATCC 11170 / ATH 1.1.1 / DSM 467 / LMG 4362 / NCIMB 8255 / S1).